Consider the following 230-residue polypeptide: Thymine/uracil-DNA glycosylase (230 aa).

Positions 204, 211, 214, and 221 each coordinate [4Fe-4S] cluster.

It belongs to the Nth/MutY family. It depends on [4Fe-4S] cluster as a cofactor.

The enzyme catalyses Hydrolyzes mismatched double-stranded DNA and polynucleotides, releasing free thymine.. In terms of biological role, DNA glycosylase that excises thymine from T/G mismatches and uracil from U/G mismatches. Can also process T/GO and U/GO, but not A/G, T/C and U/C. Has weak AP lyase activity. This Pyrobaculum aerophilum (strain ATCC 51768 / DSM 7523 / JCM 9630 / CIP 104966 / NBRC 100827 / IM2) protein is Thymine/uracil-DNA glycosylase.